The sequence spans 168 residues: CDP-archaeol synthase (168 aa).

A run of 5 helical transmembrane segments spans residues 4–24 (IFEA…PVVL), 51–71 (GFFG…LMFP), 81–101 (VGVA…GSFI), 112–132 (PAVG…AYPL), and 138–158 (GEVL…NVFA).

Belongs to the CDP-archaeol synthase family. It depends on Mg(2+) as a cofactor.

The protein resides in the cell membrane. It catalyses the reaction 2,3-bis-O-(geranylgeranyl)-sn-glycerol 1-phosphate + CTP + H(+) = CDP-2,3-bis-O-(geranylgeranyl)-sn-glycerol + diphosphate. The protein operates within membrane lipid metabolism; glycerophospholipid metabolism. Its function is as follows. Catalyzes the formation of CDP-2,3-bis-(O-geranylgeranyl)-sn-glycerol (CDP-archaeol) from 2,3-bis-(O-geranylgeranyl)-sn-glycerol 1-phosphate (DGGGP) and CTP. This reaction is the third ether-bond-formation step in the biosynthesis of archaeal membrane lipids. The polypeptide is CDP-archaeol synthase (Pyrococcus abyssi (strain GE5 / Orsay)).